The following is a 95-amino-acid chain: Acylphosphatase (95 aa).

In terms of domain architecture, Acylphosphatase-like spans Ala-7 to Arg-94. Active-site residues include Arg-22 and Asn-40. Residues Val-76–Ala-88 show a composition bias toward low complexity. The disordered stretch occupies residues Val-76–Gly-95.

It belongs to the acylphosphatase family.

It carries out the reaction an acyl phosphate + H2O = a carboxylate + phosphate + H(+). The chain is Acylphosphatase (acyP) from Rhizobium meliloti (strain 1021) (Ensifer meliloti).